The primary structure comprises 365 residues: Cobalt-precorrin-5B C(1)-methyltransferase (365 aa).

The protein belongs to the CbiD family.

It catalyses the reaction Co-precorrin-5B + S-adenosyl-L-methionine = Co-precorrin-6A + S-adenosyl-L-homocysteine. It participates in cofactor biosynthesis; adenosylcobalamin biosynthesis; cob(II)yrinate a,c-diamide from sirohydrochlorin (anaerobic route): step 6/10. Its function is as follows. Catalyzes the methylation of C-1 in cobalt-precorrin-5B to form cobalt-precorrin-6A. The protein is Cobalt-precorrin-5B C(1)-methyltransferase of Methanococcus maripaludis (strain DSM 14266 / JCM 13030 / NBRC 101832 / S2 / LL).